A 250-amino-acid polypeptide reads, in one-letter code: MQGQAQQQAYDRGITIFSPDGRLYQVEYAREAVKRGTASVGIRTPDGIVLAADKRSRSPLMEPTSVEKIHKTDDHVGIASAGHVADARQLIDFARRQAQVNRLRYGEPVGIETLTKNVTDNIQQYTQVGGARPFGVALLIGGIEDGSPRLYETDPSGTPYEWKAVSIGADRSDLQEHLEENYTEELSLDEGVGLALRTIAISNDDELTAAGVDVATVASDTEEFIELTNDEISAYIADNDLEPAEETDSE.

The protein belongs to the peptidase T1A family. The 20S proteasome core is composed of 14 alpha and 14 beta subunits that assemble into four stacked heptameric rings, resulting in a barrel-shaped structure. The two inner rings, each composed of seven catalytic beta subunits, are sandwiched by two outer rings, each composed of seven alpha subunits. The catalytic chamber with the active sites is on the inside of the barrel. Has a gated structure, the ends of the cylinder being occluded by the N-termini of the alpha-subunits. Is capped at one or both ends by the proteasome regulatory ATPase, PAN.

It localises to the cytoplasm. With respect to regulation, the formation of the proteasomal ATPase PAN-20S proteasome complex, via the docking of the C-termini of PAN into the intersubunit pockets in the alpha-rings, triggers opening of the gate for substrate entry. Interconversion between the open-gate and close-gate conformations leads to a dynamic regulation of the 20S proteasome proteolysis activity. Functionally, component of the proteasome core, a large protease complex with broad specificity involved in protein degradation. This Haloquadratum walsbyi (strain DSM 16790 / HBSQ001) protein is Proteasome subunit alpha.